Consider the following 525-residue polypeptide: Frizzled-4 (525 aa).

Residues 1–24 (MERRGGGGRMLALLLAGLLGGARG) form the signal peptide. At 25 to 200 (FGDEEERRCD…KCGYDAGLYS (176 aa)) the chain is on the extracellular side. Residues 28-149 (EEERRCDAIR…NDHNHMCMEG (122 aa)) form the FZ domain. Disulfide bonds link Cys33–Cys94, Cys41–Cys87, Cys78–Cys116, Cys105–Cys146, Cys109–Cys133, Cys169–Cys188, Cys192–Cys270, and Cys290–Cys365. An N-linked (GlcNAc...) asparagine glycan is attached at Asn47. A glycan (N-linked (GlcNAc...) asparagine) is linked at Asn132. Residues 201 to 231 (RSAKEFTDIWMAVWASLCFISTAFTVLTFLI) form a helical membrane-spanning segment. Residues 232–237 (DSSRFS) lie on the Cytoplasmic side of the membrane. The chain crosses the membrane as a helical span at residues 238 to 263 (YPERPIIFLSMCYNIYSIAYIVRLTV). The Extracellular segment spans residues 264 to 287 (GRERISCDFEEAAEPVLIQEGLKN). Residues 288-321 (TGCAIIFLLMYFFGMASSIWWVILTLTWFLAAGL) form a helical membrane-spanning segment. The Cytoplasmic segment spans residues 322 to 324 (KWG). Residues 325–353 (HEAIEMHSSYFHIAAWAIPAVKTIVILIM) form a helical membrane-spanning segment. The Extracellular portion of the chain corresponds to 354–371 (RLVDADELTGLCYVGNQN). A helical membrane pass occupies residues 372 to 406 (LDALTGFVVAPLFTYLVIGTLFIAAGLVALFKIRS). The Cytoplasmic portion of the chain corresponds to 407 to 419 (NLQKDGTKTDKLE). Residues 420–448 (RLMVKIGVFSVLYTVPATCVIACYFYEIS) traverse the membrane as a helical segment. Residues 449–461 (NWAVFRYSADDSN) are Extracellular-facing. Residues 462 to 483 (MAVEMLKIFMSLLVGITSGMWI) traverse the membrane as a helical segment. At 484–525 (WSAKTLHTWQKCSNRLVNSGKVKREKRADGWVKPGKGNETVV) the chain is on the cytoplasmic side. The Lys-Thr-X-X-X-Trp motif, mediates interaction with the PDZ domain of Dvl family members signature appears at 487–492 (KTLHTW). Residues 523 to 525 (TVV) carry the PDZ-binding motif.

This sequence belongs to the G-protein coupled receptor Fz/Smo family. As to quaternary structure, interacts (via FZ domain) with TSKU; TSKU competes with WNT2B for binding to FZD4, inhibiting Wnt signaling and repressing peripheral eye development. In terms of tissue distribution, expressed in the developing kidney, interdigital spaces and optic cup.

The protein localises to the cell membrane. Receptor for Wnt proteins. Most frizzled receptors are coupled to the beta-catenin canonical signaling pathway, which leads to the activation of disheveled proteins, inhibition of GSK-3 kinase, nuclear accumulation of beta-catenin and activation of Wnt target genes. A second signaling pathway involving PKC and calcium fluxes has been seen for some family members, but it is not yet clear if it represents a distinct pathway or if it can be integrated in the canonical pathway, as PKC seems to be required for Wnt-mediated inactivation of GSK-3 kinase. Both pathways seem to involve interactions with G-proteins. May be involved in transduction and intercellular transmission of polarity information during tissue morphogenesis and/or in differentiated tissues. This chain is Frizzled-4 (FZD4), found in Gallus gallus (Chicken).